Reading from the N-terminus, the 248-residue chain is Probable transcriptional regulatory protein Syncc9902_0542 (248 aa).

It belongs to the TACO1 family.

It is found in the cytoplasm. In Synechococcus sp. (strain CC9902), this protein is Probable transcriptional regulatory protein Syncc9902_0542.